We begin with the raw amino-acid sequence, 281 residues long: MVVVKNIDEMKKICRELRKEKTIGFVPTMGYLHEGHLSLVRRSKKENDITVVSIFVNPTQFGPNEDYNSYPRNLNRDASLLEKEDVDYVFIPEIEQMYPKDYSTYINEEKLSRHLCGRSRPGHFRGVCTVVTKLFNIVKPNRAYFGQKDAQQFRVIRRMVRDLNMDVEVIECPIVREPDGLAMSSRNIYLSTEERNQALALNRSLKIAENLYRSGEKNTERMKEKIVQYLSSFDKIKIDYVEIVSEETLEPVEKIEGKVVVAIAAWVGKARLIDNTILGEI.

Position 29-36 (methionine 29–histidine 36) interacts with ATP. The Proton donor role is filled by histidine 36. Residue glutamine 60 participates in (R)-pantoate binding. Residue glutamine 60 coordinates beta-alanine. Glycine 146–aspartate 149 serves as a coordination point for ATP. Glutamine 152 provides a ligand contact to (R)-pantoate. Residues valine 175 and methionine 183–arginine 186 each bind ATP.

This sequence belongs to the pantothenate synthetase family. Homodimer.

Its subcellular location is the cytoplasm. It catalyses the reaction (R)-pantoate + beta-alanine + ATP = (R)-pantothenate + AMP + diphosphate + H(+). It participates in cofactor biosynthesis; (R)-pantothenate biosynthesis; (R)-pantothenate from (R)-pantoate and beta-alanine: step 1/1. Its function is as follows. Catalyzes the condensation of pantoate with beta-alanine in an ATP-dependent reaction via a pantoyl-adenylate intermediate. The sequence is that of Pantothenate synthetase from Pseudothermotoga lettingae (strain ATCC BAA-301 / DSM 14385 / NBRC 107922 / TMO) (Thermotoga lettingae).